We begin with the raw amino-acid sequence, 355 residues long: Methylthioribose-1-phosphate isomerase (355 aa).

Residues 50–52, arginine 93, and glutamine 198 contribute to the substrate site; that span reads RGA. Catalysis depends on aspartate 239, which acts as the Proton donor. 249-250 lines the substrate pocket; the sequence is NK.

It belongs to the eIF-2B alpha/beta/delta subunits family. MtnA subfamily. Homodimer.

The enzyme catalyses 5-(methylsulfanyl)-alpha-D-ribose 1-phosphate = 5-(methylsulfanyl)-D-ribulose 1-phosphate. It functions in the pathway amino-acid biosynthesis; L-methionine biosynthesis via salvage pathway; L-methionine from S-methyl-5-thio-alpha-D-ribose 1-phosphate: step 1/6. Functionally, catalyzes the interconversion of methylthioribose-1-phosphate (MTR-1-P) into methylthioribulose-1-phosphate (MTRu-1-P). This is Methylthioribose-1-phosphate isomerase from Geobacillus kaustophilus (strain HTA426).